The following is a 167-amino-acid chain: uncharacterized protein (167 aa).

Residues Lys70–Val118 are a coiled coil. Residues Glu128–Arg155 are compositionally biased toward basic and acidic residues. Residues Glu128–Asp167 form a disordered region.

This is an uncharacterized protein from Archaeoglobus fulgidus (strain ATCC 49558 / DSM 4304 / JCM 9628 / NBRC 100126 / VC-16).